Reading from the N-terminus, the 389-residue chain is Spore coat polysaccharide biosynthesis protein SpsC (389 aa).

An N6-(pyridoxal phosphate)lysine modification is found at Lys-187.

This sequence belongs to the DegT/DnrJ/EryC1 family. Pyridoxal 5'-phosphate is required as a cofactor.

The protein operates within spore coat biogenesis; spore coat polysaccharide biosynthesis. This chain is Spore coat polysaccharide biosynthesis protein SpsC (spsC), found in Bacillus subtilis (strain 168).